A 697-amino-acid chain; its full sequence is Gametogenetin-binding protein 2 (697 aa).

At S360 the chain carries Phosphoserine.

In terms of assembly, interacts with GGN. As to expression, expressed in heart, brain, placenta, lung, liver, skeletal muscle, kidney and pancreas. Expressed more abundantly in heart, pancreas and skeletal muscle.

Its subcellular location is the cytoplasmic vesicle. In terms of biological role, may be involved in spermatogenesis. This chain is Gametogenetin-binding protein 2 (GGNBP2), found in Homo sapiens (Human).